We begin with the raw amino-acid sequence, 186 residues long: Low amplitude and bright protein LabA (186 aa).

In terms of biological role, functions in an output pathway of the circadian clock. One of three clock output pathways. Involved in negative feedback regulation of KaiC; deletion leads to overexpression of KaiC protein and decreases the amplitude of the circadian response. Overexpression reduces the expression of circadian genes. The protein is Low amplitude and bright protein LabA of Synechococcus elongatus (strain ATCC 33912 / PCC 7942 / FACHB-805) (Anacystis nidulans R2).